A 430-amino-acid chain; its full sequence is MLDPNLLRNEPDAVAEKLARRGYKLDVDTLRAHEERRKVLQVETENLQAERNSRSKSIGQAKARGEDIEPLRQEVNALGERLDAAKAELDALLTCINDFSMAIPNIPADVVPLGKDDSENQEISRWGEPRQFDFTVRDHVELGEMAAGLDFAAAVKLTGSRFIVMKGQIALMHRALSQFMLDLHTEQHGYQETYVPYLVNHASLYGTGQLPKFGEDLFHTRPLDEEASSSNYALIPTSEVPLTNLVRDEILEEETLPLKMTAHTPCFRSEAGAYGRDTRGLIRMHQFDKVEMVHITRPEDSMDALEELVGHAEKVLQLLNLPYRKVLLCTGDMGFGAQKTYDLEVWLPAQDTYREISSCSNMGDFQARRMKARCRPRGESKTRLVHTLNGSGLAVGRTLVAVLENYQQADGRIEVPEVLRPYMKGLHFIG.

A compositionally biased stretch (polar residues) spans 45-58 (ENLQAERNSRSKSI). The segment at 45-65 (ENLQAERNSRSKSIGQAKARG) is disordered. 237–239 (TSE) is an L-serine binding site. Residue 268–270 (RSE) coordinates ATP. Glu291 lines the L-serine pocket. 355–358 (EISS) is a binding site for ATP. L-serine is bound at residue Ser391.

This sequence belongs to the class-II aminoacyl-tRNA synthetase family. Type-1 seryl-tRNA synthetase subfamily. As to quaternary structure, homodimer. The tRNA molecule binds across the dimer.

It is found in the cytoplasm. It carries out the reaction tRNA(Ser) + L-serine + ATP = L-seryl-tRNA(Ser) + AMP + diphosphate + H(+). It catalyses the reaction tRNA(Sec) + L-serine + ATP = L-seryl-tRNA(Sec) + AMP + diphosphate + H(+). Its pathway is aminoacyl-tRNA biosynthesis; selenocysteinyl-tRNA(Sec) biosynthesis; L-seryl-tRNA(Sec) from L-serine and tRNA(Sec): step 1/1. Its function is as follows. Catalyzes the attachment of serine to tRNA(Ser). Is also able to aminoacylate tRNA(Sec) with serine, to form the misacylated tRNA L-seryl-tRNA(Sec), which will be further converted into selenocysteinyl-tRNA(Sec). The protein is Serine--tRNA ligase of Erwinia tasmaniensis (strain DSM 17950 / CFBP 7177 / CIP 109463 / NCPPB 4357 / Et1/99).